The following is a 116-amino-acid chain: Large ribosomal subunit protein uL18 (116 aa).

It belongs to the universal ribosomal protein uL18 family. In terms of assembly, part of the 50S ribosomal subunit; part of the 5S rRNA/L5/L18/L25 subcomplex. Contacts the 5S and 23S rRNAs.

In terms of biological role, this is one of the proteins that bind and probably mediate the attachment of the 5S RNA into the large ribosomal subunit, where it forms part of the central protuberance. The sequence is that of Large ribosomal subunit protein uL18 from Shewanella denitrificans (strain OS217 / ATCC BAA-1090 / DSM 15013).